Here is a 63-residue protein sequence, read N- to C-terminus: MPQLDTSMWLLTILSMLLTLFVLFQLKISKHSYSPNPKLAHTKTQKQQAPWNTTWTKIYLPLL.

The helical transmembrane segment at 8-24 threads the bilayer; sequence MWLLTILSMLLTLFVLF. The residue at position 57 (lysine 57) is an N6-acetyllysine.

The protein belongs to the ATPase protein 8 family. In terms of assembly, component of the ATP synthase complex composed at least of ATP5F1A/subunit alpha, ATP5F1B/subunit beta, ATP5MC1/subunit c (homooctomer), MT-ATP6/subunit a, MT-ATP8/subunit 8, ATP5ME/subunit e, ATP5MF/subunit f, ATP5MG/subunit g, ATP5MK/subunit k, ATP5MJ/subunit j, ATP5F1C/subunit gamma, ATP5F1D/subunit delta, ATP5F1E/subunit epsilon, ATP5PF/subunit F6, ATP5PB/subunit b, ATP5PD/subunit d, ATP5PO/subunit OSCP. ATP synthase complex consists of a soluble F(1) head domain (subunits alpha(3) and beta(3)) - the catalytic core - and a membrane F(0) domain - the membrane proton channel (subunits c, a, 8, e, f, g, k and j). These two domains are linked by a central stalk (subunits gamma, delta, and epsilon) rotating inside the F1 region and a stationary peripheral stalk (subunits F6, b, d, and OSCP). Interacts with PRICKLE3.

Its subcellular location is the mitochondrion membrane. Its function is as follows. Subunit 8, of the mitochondrial membrane ATP synthase complex (F(1)F(0) ATP synthase or Complex V) that produces ATP from ADP in the presence of a proton gradient across the membrane which is generated by electron transport complexes of the respiratory chain. ATP synthase complex consist of a soluble F(1) head domain - the catalytic core - and a membrane F(1) domain - the membrane proton channel. These two domains are linked by a central stalk rotating inside the F(1) region and a stationary peripheral stalk. During catalysis, ATP synthesis in the catalytic domain of F(1) is coupled via a rotary mechanism of the central stalk subunits to proton translocation. In vivo, can only synthesize ATP although its ATP hydrolase activity can be activated artificially in vitro. Part of the complex F(0) domain. This Balaenoptera physalus (Fin whale) protein is ATP synthase F(0) complex subunit 8.